Here is a 94-residue protein sequence, read N- to C-terminus: MFTLILQIALGIMAVSTFLYVIRVIKGPTVPDRVVALDAIGINLIAITALVSILLKTSAFLDIILLLGILSFIGTIAFSKFLEKGEIIENDRNR.

3 helical membrane passes run 2–22 (FTLILQIALGIMAVSTFLYVI), 34–54 (VVALDAIGINLIAITALVSIL), and 59–79 (AFLDIILLLGILSFIGTIAFS).

It belongs to the CPA3 antiporters (TC 2.A.63) subunit F family. Forms a heterooligomeric complex that consists of seven subunits: MrpA, MrpB, MrpC, MrpD, MrpE, MrpF and MrpG.

It is found in the cell membrane. Mrp complex is a Na(+)/H(+) antiporter that is considered to be the major Na(+) excretion system in B.subtilis. Has a major role in Na(+) resistance and a minor role in Na(+)- and K(+)-dependent pH homeostasis as compared to TetB. MrpA may be the actual Na(+)/H(+) antiporter, although the six other Mrp proteins are all required for Na(+)/H(+) antiport activity and Na(+) resistance. MrpA is required for initiation of sporulation when external Na(+) concentration increases. Also transports Li(+) but not K(+), Ca(2+) or Mg(2+). Functionally, involved in cholate and Na(+) efflux activities, which may be mechanistically coupled. Does not require other Mrp proteins for its own function. The polypeptide is Na(+)/H(+) antiporter subunit F (mrpF) (Bacillus subtilis (strain 168)).